A 195-amino-acid polypeptide reads, in one-letter code: Probable DNA-directed RNA polymerase subunit delta (195 aa).

Positions 14 to 83 (LSMIEVARAI…GDNKWGLRSW (70 aa)) constitute an HTH HARE-type domain. 2 stretches are compositionally biased toward acidic residues: residues 119-138 (GDED…DSYE) and 145-195 (YDDE…GEEE). The segment at 119 to 195 (GDEDAIDYSD…SDDDAEGEEE (77 aa)) is disordered.

It belongs to the RpoE family. In terms of assembly, RNAP is composed of a core of 2 alpha, a beta and a beta' subunits. The core is associated with a delta subunit and one of several sigma factors.

In terms of biological role, participates in both the initiation and recycling phases of transcription. In the presence of the delta subunit, RNAP displays an increased specificity of transcription, a decreased affinity for nucleic acids, and an increased efficiency of RNA synthesis because of enhanced recycling. This is Probable DNA-directed RNA polymerase subunit delta from Streptococcus gordonii (strain Challis / ATCC 35105 / BCRC 15272 / CH1 / DL1 / V288).